The chain runs to 273 residues: MSPKGDGLGTVDGLHSQVLQEQVSTGDNLHECDSQGPSKDTLVREGKTYKCKECGKVFNKNSLLVRHHQIHAGVKTYECQECGKAFHEKVDFVRHMRIHSGEKPCKCVECGKVFNRRSHLLCYRQIHTGEKPYECSECGKTFSYHSVFIQHRMTHTGEKLFGCKECGKTFYYNSSLTRHMKIHTGEKPYKCGECGKTFTYHSVFFRHSMTHTAGKPYECKECGKGFYYSYSLTRHTRSHTGEKPYECLEHRKAFGYHSAFAQQSKIHSGGKNL.

2 consecutive C2H2-type zinc fingers follow at residues 49–71 (YKCK…HQIH) and 77–99 (YECQ…MRIH). Residues 105 to 127 (CKCVECGKVFNRRSHLLCYRQIH) form a C2H2-type 3; atypical zinc finger. 4 C2H2-type zinc fingers span residues 133–155 (YECS…RMTH), 161–183 (FGCK…MKIH), 189–211 (YKCG…SMTH), and 217–239 (YECK…TRSH).

Belongs to the krueppel C2H2-type zinc-finger protein family.

The protein localises to the nucleus. Functionally, may be involved in transcriptional regulation. This chain is Zinc finger protein 80 (ZNF80), found in Gorilla gorilla gorilla (Western lowland gorilla).